Here is a 307-residue protein sequence, read N- to C-terminus: tRNA pseudouridine synthase B (307 aa).

Aspartate 38 acts as the Nucleophile in catalysis.

It belongs to the pseudouridine synthase TruB family. Type 1 subfamily.

It catalyses the reaction uridine(55) in tRNA = pseudouridine(55) in tRNA. Responsible for synthesis of pseudouridine from uracil-55 in the psi GC loop of transfer RNAs. The chain is tRNA pseudouridine synthase B from Bacillus thuringiensis (strain Al Hakam).